The primary structure comprises 720 residues: MLRVLHRAASALVMATVIGLAPGVAFALAEPTSTPQAPIAAYKPRSNEILWDGYGVPHIYGVDAPSAFYGYGWAQARSHGDNILRLYGEARGKGAEYWGPDYEQTTVWLLTNGVPERAQQWYAQQSPDFRANLDAFAAGINAYAQQNPDDISPEVRQVLPVSGADVVAHAHRLMNFLYVASPGRTLGEGDPPDLADQGSNSWAVAPGKTANGNALLLQNPHLSWTTDYFTYYEAHLVTPDFEIYGATQIGLPVIRFAFNQRMGITNTVNGMVGATNYRLTLQDGGYLYDGQVRPFERRQASYRLRQADGSTVDKPLEIRSSVHGPVFERADGTAVAVRVAGLDRPGMLEQYFDMITAHSFDDYEAAMARMQVPTFNIVYADREGTINYSFNGVAPKRAEGDIAFWQGNVPGDSSRYLWTETHPLDDLPRVTNPPGGFVQNSNDPPWTPTWPVTYTPRDHPSYLAPQTPHSLRAQQSVRLMSENDDLTLERFMALQFSHRAVMADRTLPDLIPAALIDPDPEVQAAARLLAAWDREFTSDSRAALLFEEWARLFAGQNFAGQAAFATPWSLDKPVSTPYGVRDPKAAVDQLRTAIANTKRKYGAIDRPFGDASRMILNDVNVPGAAGYGNLGSFRVFTWSDPDENGIRTPVHGETWVAMIEFSTPVRAYGLMSYGNSRQPGTTHYSDQIERVSRADFRELLLRREQVEAAVQERTPFNFKP.

Positions 1 to 29 (MLRVLHRAASALVMATVIGLAPGVAFALA) are cleaved as a signal peptide. Positions 188-198 (EGDPPDLADQG) are cleaved as a propeptide — spacer peptide. Catalysis depends on S199, which acts as the Nucleophile. Catalysis depends on residues H221 and E653.

Belongs to the peptidase S45 family. As to quaternary structure, heterodimer of a small subunit and a large subunit processed from the same precursor.

It localises to the periplasm. It carries out the reaction (7R)-7-(4-carboxybutanamido)cephalosporanate + H2O = (7R)-7-aminocephalosporanate + glutarate. Its function is as follows. Catalyzes the deacylation of 7 beta-(4-carboxybutanamido)cephalosporanic acid (glutaryl-7-aminocephalosporanic acid or GL-7-ACA) to 7-aminocephalosporanic acid (7-ACA). Cannot efficiently use cephalosporin C (CPC), penicillin G, or ampicillin as substrates. The protein is Glutaryl-7-aminocephalosporanic-acid acylase of Brevundimonas diminuta (Pseudomonas diminuta).